The chain runs to 196 residues: Putative NADH dehydrogenase/NAD(P)H nitroreductase Reut_A1586 (196 aa).

This sequence belongs to the nitroreductase family. HadB/RutE subfamily. Requires FMN as cofactor.

In Cupriavidus pinatubonensis (strain JMP 134 / LMG 1197) (Cupriavidus necator (strain JMP 134)), this protein is Putative NADH dehydrogenase/NAD(P)H nitroreductase Reut_A1586.